The chain runs to 162 residues: G/U mismatch-specific DNA glycosylase (162 aa).

Belongs to the uracil-DNA glycosylase (UDG) superfamily. TDG/mug family. As to quaternary structure, binds DNA as a monomer.

The protein resides in the cytoplasm. The catalysed reaction is Specifically hydrolyzes mismatched double-stranded DNA and polynucleotides, releasing free uracil.. In terms of biological role, excises ethenocytosine and uracil, which can arise by alkylation or deamination of cytosine, respectively, from the corresponding mispairs with guanine in ds-DNA. It is capable of hydrolyzing the carbon-nitrogen bond between the sugar-phosphate backbone of the DNA and the mispaired base. The complementary strand guanine functions in substrate recognition. Required for DNA damage lesion repair in stationary-phase cells. The chain is G/U mismatch-specific DNA glycosylase from Serratia marcescens.